Here is a 56-residue protein sequence, read N- to C-terminus: Large ribosomal subunit protein bL33 (56 aa).

Belongs to the bacterial ribosomal protein bL33 family.

The sequence is that of Large ribosomal subunit protein bL33 from Rickettsia bellii (strain OSU 85-389).